The following is a 202-amino-acid chain: Glycerol-3-phosphate acyltransferase (202 aa).

The next 6 membrane-spanning stretches (helical) occupy residues 2-22 (MIIV…GFVI), 54-74 (FLVT…PLWL), 85-105 (FFTN…YPVY), 120-140 (VVLG…FIVL), 141-161 (KIFK…VIGS), and 162-182 (LIIQ…ILII).

It belongs to the PlsY family. Probably interacts with PlsX.

Its subcellular location is the cell membrane. The catalysed reaction is an acyl phosphate + sn-glycerol 3-phosphate = a 1-acyl-sn-glycero-3-phosphate + phosphate. The protein operates within lipid metabolism; phospholipid metabolism. Catalyzes the transfer of an acyl group from acyl-phosphate (acyl-PO(4)) to glycerol-3-phosphate (G3P) to form lysophosphatidic acid (LPA). This enzyme utilizes acyl-phosphate as fatty acyl donor, but not acyl-CoA or acyl-ACP. In Staphylococcus aureus (strain USA300), this protein is Glycerol-3-phosphate acyltransferase.